The primary structure comprises 305 residues: Ribonuclease BN (305 aa).

Positions 64, 66, 68, 69, 141, 212, and 270 each coordinate Zn(2+). Aspartate 68 serves as the catalytic Proton acceptor.

It belongs to the RNase Z family. RNase BN subfamily. As to quaternary structure, homodimer. Requires Zn(2+) as cofactor.

In terms of biological role, zinc phosphodiesterase, which has both exoribonuclease and endoribonuclease activities. The sequence is that of Ribonuclease BN from Citrobacter koseri (strain ATCC BAA-895 / CDC 4225-83 / SGSC4696).